The following is a 400-amino-acid chain: Egl nine homolog 1 (400 aa).

An N-acetylalanine modification is found at A2. Residues 6-20 (GGPGVLSASERDRQY) are required for nuclear export. S12 is modified (phosphoserine). 8 residues coordinate Zn(2+): C21, C24, C33, C36, C42, H46, H54, and C58. An MYND-type; atypical zinc finger spans residues 21–58 (CELCGKMENLLRCGRCRSSFYCCKEHQRQDWKKHKLVC). Positions 62–74 (EAPRAQPAPAQPR) are enriched in low complexity. Positions 62-161 (EAPRAQPAPA…PGGGLRPNGQ (100 aa)) are disordered. S114 is modified (phosphoserine). Positions 142-157 (AGGGPGEALSPGGGLR) are enriched in gly residues. S-nitrosocysteine occurs at positions 178 and 185. A beta(2)beta(3) 'finger-like' loop region spans residues 218–228 (VSQKSDSSKDI). The 99-residue stretch at 271–369 (GRTKAMVACY…RYAITVWYFD (99 aa)) folds into the Fe2OG dioxygenase domain. C279 carries the post-translational modification S-nitrosocysteine. Residues H290 and D292 each coordinate Fe cation. An S-nitrosocysteine mark is found at C300 and C303. H351 is a binding site for Fe cation. R360 is a binding site for 2-oxoglutarate.

As to quaternary structure, monomer. Interacts with ING4; the interaction inhibits the hydroxylation of HIF alpha proteins. Interacts with PTGES3 (via PXLE motif); thereby recruiting EGLN1 to the HSP90 pathway to facilitate HIF alpha proteins hydroxylation. Interacts with LIMD1. Found in a complex composed of LIMD1, VHL, EGLN1/PHD2, ELOB and CUL2. Interacts with EPAS1. Interacts with CBFA2T3 and HIF1A. Fe(2+) is required as a cofactor. It depends on L-ascorbate as a cofactor. In terms of processing, S-nitrosylation inhibits the enzyme activity up to 60% under aerobic conditions. Chelation of Fe(2+) has no effect on the S-nitrosylation. It is uncertain whether nitrosylation occurs on Cys-300 or Cys-303. Expressed in heart, brain liver, skeletal muscle and kidney. Low levels were detected in the lung. Constitutively expressed during differentiation of C2C12 skeletal myocytes.

The protein resides in the cytoplasm. The protein localises to the nucleus. The enzyme catalyses L-prolyl-[hypoxia-inducible factor alpha subunit] + 2-oxoglutarate + O2 = trans-4-hydroxy-L-prolyl-[hypoxia-inducible factor alpha subunit] + succinate + CO2. Functionally, cellular oxygen sensor that catalyzes, under normoxic conditions, the post-translational formation of 4-hydroxyproline in hypoxia-inducible factor (HIF) alpha proteins. Hydroxylates a specific proline found in each of the oxygen-dependent degradation (ODD) domains (N-terminal, NODD, and C-terminal, CODD) of HIF1A. Also hydroxylates HIF2A. Has a preference for the CODD site for both HIF1A and HIF1B. Hydroxylated HIFs are then targeted for proteasomal degradation via the von Hippel-Lindau ubiquitination complex. Under hypoxic conditions, the hydroxylation reaction is attenuated allowing HIFs to escape degradation resulting in their translocation to the nucleus, heterodimerization with HIF1B, and increased expression of hypoxy-inducible genes. EGLN1 is the most important isozyme under normoxia and, through regulating the stability of HIF1, involved in various hypoxia-influenced processes such as angiogenesis in retinal and cardiac functionality. Target proteins are preferentially recognized via a LXXLAP motif. The protein is Egl nine homolog 1 (Egln1) of Mus musculus (Mouse).